The primary structure comprises 427 residues: Phosphatidylinositol 4-phosphate 5-kinase 10 (427 aa).

A PIPK domain is found at 1 to 419; it reads MFTREITAKD…RFQDFVSQIF (419 aa). Disordered stretches follow at residues 247–287 and 334–355; these read SRGS…DSEN and MKIPGRARRVGRGESGSVVGKQ. The tract at residues 379-400 is activation loop; the sequence is YGVRKRLEHCYKSIQHSSKTIS.

The catalysed reaction is a 1,2-diacyl-sn-glycero-3-phospho-(1D-myo-inositol 4-phosphate) + ATP = a 1,2-diacyl-sn-glycero-3-phospho-(1D-myo-inositol-4,5-bisphosphate) + ADP + H(+). This Arabidopsis thaliana (Mouse-ear cress) protein is Phosphatidylinositol 4-phosphate 5-kinase 10 (PIP5K10).